The sequence spans 368 residues: Nucleotide pyrophosphatase/phosphodiesterase (368 aa).

The protein belongs to the metallophosphoesterase superfamily. Monomer and homomer. Glycosylated.

It localises to the plastid. The protein localises to the chloroplast. Hydrolyzes pyrophosphate, phosphodiester and phosphosulfate linkages of nucleotide-sugars, sulfonucleotides and nucleoside di and triphosphates. Highest activity observed with the substrates ADP-glucose and adenosine 5'-phosphosulfate. The chain is Nucleotide pyrophosphatase/phosphodiesterase from Hordeum vulgare (Barley).